A 187-amino-acid chain; its full sequence is Flavin prenyltransferase UbiX (187 aa).

Residues 9-11 (GAS), Ser-34, and Arg-123 contribute to the FMN site. Tyr-153 and Lys-169 together coordinate dimethylallyl phosphate.

The protein belongs to the UbiX/PAD1 family.

The enzyme catalyses dimethylallyl phosphate + FMNH2 = prenylated FMNH2 + phosphate. Flavin prenyltransferase that catalyzes the synthesis of the prenylated FMN cofactor (prenyl-FMN) for 4-hydroxy-3-polyprenylbenzoic acid decarboxylase UbiD. The prenyltransferase is metal-independent and links a dimethylallyl moiety from dimethylallyl monophosphate (DMAP) to the flavin N5 and C6 atoms of FMN. In Helicobacter pylori (strain J99 / ATCC 700824) (Campylobacter pylori J99), this protein is Flavin prenyltransferase UbiX.